Consider the following 1249-residue polypeptide: Clustered mitochondria protein homolog (1249 aa).

A disordered region spans residues 1–32 (MAQTNGELEHSKETPEQLTNGNHPEETQEEDN). The 245-residue stretch at 318–562 (DITRSQENYL…RVTPLDVMWQ (245 aa)) folds into the Clu domain. Residues 605–628 (KAEADAAKAESSEATESKEQASEE) show a composition bias toward basic and acidic residues. Disordered stretches follow at residues 605 to 636 (KAEA…DQER) and 868 to 903 (KAPA…AAKE). TPR repeat units follow at residues 974-1007 (AKLY…TERT), 1016-1049 (ILSY…WKII), and 1058-1091 (ITTM…CESL). A disordered region spans residues 1174-1249 (NMNPRSLGTK…KLRGSKKSSA (76 aa)). Over residues 1176 to 1190 (NPRSLGTKIQPQVGQ) the composition is skewed to polar residues.

Belongs to the CLU family. May associate with the eukaryotic translation initiation factor 3 (eIF-3) complex.

The protein resides in the cytoplasm. Its function is as follows. mRNA-binding protein involved in proper cytoplasmic distribution of mitochondria. This is Clustered mitochondria protein homolog from Aspergillus niger (strain ATCC MYA-4892 / CBS 513.88 / FGSC A1513).